We begin with the raw amino-acid sequence, 252 residues long: uncharacterized protein (252 aa).

Polar residues-rich tracts occupy residues 108-122 (RTTM…SSSE) and 136-153 (MPNT…NSQS). Residues 108-252 (RTTMRQGRFP…LIWNDSSSSK (145 aa)) form a disordered region. Residues 154-172 (TEKEDAMYSKDNGFEDRSK) show a composition bias toward basic and acidic residues. Over residues 201-226 (VKSTDSAFSGQENSEAFPSRTSNLGS) the composition is skewed to polar residues.

It is found in the cytoplasm. Its subcellular location is the mitochondrion. The protein localises to the nucleus. This is an uncharacterized protein from Schizosaccharomyces pombe (strain 972 / ATCC 24843) (Fission yeast).